Consider the following 99-residue polypeptide: DNA-directed RNA polymerase subunit omega (99 aa).

This sequence belongs to the RNA polymerase subunit omega family. In terms of assembly, the RNAP catalytic core consists of 2 alpha, 1 beta, 1 beta' and 1 omega subunit. When a sigma factor is associated with the core the holoenzyme is formed, which can initiate transcription.

The enzyme catalyses RNA(n) + a ribonucleoside 5'-triphosphate = RNA(n+1) + diphosphate. In terms of biological role, promotes RNA polymerase assembly. Latches the N- and C-terminal regions of the beta' subunit thereby facilitating its interaction with the beta and alpha subunits. This chain is DNA-directed RNA polymerase subunit omega, found in Xanthomonas axonopodis pv. citri (strain 306).